Consider the following 283-residue polypeptide: Transmembrane protein 119 (283 aa).

The first 25 residues, 1–25 (MVSAAAPSLLILLLLLLGSVPATDA), serve as a signal peptide directing secretion. Topologically, residues 26-96 (RSVPLKATFL…IVDFFRQYVM (71 aa)) are extracellular. Residue S41 is glycosylated (O-linked (Xyl...) (chondroitin sulfate) serine). Positions 43–52 (EAEGSSASSP) are enriched in low complexity. Residues 43–76 (EAEGSSASSPSLPPPWTPALSPTSMGPQPITLGG) are disordered. The helical transmembrane segment at 97–117 (LIAVVGSLAFLLMFIVCAAVI) threads the bilayer. The Cytoplasmic segment spans residues 118–283 (TRQKQKASAY…CACSSVHPSV (166 aa)). Disordered regions lie at residues 136–168 (KYVDQSDRAGGPRAFSEVPDRAPDSRPEEALDS) and 183–283 (LKSP…HPSV). 2 stretches are compositionally biased toward basic and acidic residues: residues 153-164 (VPDRAPDSRPEE) and 198-213 (RMVEGRGAEEEEKGSQ). Over residues 238 to 264 (GVLEGAVVAGEGQGELEGSLLLAQEAQ) the composition is skewed to low complexity. S272 carries the phosphoserine modification.

Interacts with SMAD1, SMAD5 and RUNX2. In terms of tissue distribution, expressed in brain microglia (at protein level). Detected in urine (at protein level). Elevated expression levels seen in the brain of patients with Alzheimer disease. Expressed by osteoblast-like cells in bone tissues and follicular dendritic cells in lymphoid tissues.

The protein localises to the cell membrane. Its subcellular location is the cytoplasm. It localises to the endoplasmic reticulum membrane. The protein resides in the secreted. In terms of biological role, plays an important role in bone formation and normal bone mineralization. Promotes the differentiation of myoblasts into osteoblasts. May induce the commitment and differentiation of myoblasts into osteoblasts through an enhancement of BMP2 production and interaction with the BMP-RUNX2 pathway. Up-regulates the expression of ATF4, a transcription factor which plays a central role in osteoblast differentiation. Essential for normal spermatogenesis and late testicular differentiation. The sequence is that of Transmembrane protein 119 (TMEM119) from Homo sapiens (Human).